A 494-amino-acid polypeptide reads, in one-letter code: Alpha-amylase 2 (494 aa).

Residues 1–18 (MFLAKSIVCLALLAVANA) form the signal peptide. Cysteine 46 and cysteine 102 are joined by a disulfide. Ca(2+) is bound by residues asparagine 116, arginine 165, and aspartate 174. The cysteines at positions 153 and 167 are disulfide-linked. Arginine 202 contributes to the chloride binding site. Aspartate 204 (nucleophile) is an active-site residue. Histidine 208 provides a ligand contact to Ca(2+). The active-site Proton donor is the glutamate 241. Chloride contacts are provided by asparagine 304 and arginine 343. Residues 350–370 (FTDTDQGPPTTDGQNIASPSF) form a disordered region. The segment covering 351–363 (TDTDQGPPTTDGQ) has biased composition (low complexity). 2 disulfides stabilise this stretch: cysteine 376–cysteine 382 and cysteine 448–cysteine 460.

The protein belongs to the glycosyl hydrolase 13 family. Monomer. It depends on Ca(2+) as a cofactor. Chloride serves as cofactor.

It carries out the reaction Endohydrolysis of (1-&gt;4)-alpha-D-glucosidic linkages in polysaccharides containing three or more (1-&gt;4)-alpha-linked D-glucose units.. This Drosophila ananassae (Fruit fly) protein is Alpha-amylase 2 (Amy58).